A 230-amino-acid chain; its full sequence is RING finger protein 141 (230 aa).

Glycine 2 carries the N-myristoyl glycine lipid modification. The segment at 155-192 (CCICMDGRADLILPCAHSFCQKCIDKWSDRHRNCPICR) adopts an RING-type zinc-finger fold.

Its subcellular location is the membrane. Functionally, may be involved in spermatogenesis. This is RING finger protein 141 (RNF141) from Bos taurus (Bovine).